The chain runs to 256 residues: Fumarate reductase cytochrome b subunit (256 aa).

Residues 1–30 are Cytoplasmic-facing; sequence MTNESILESYSGVTPERKKSRMPAKLDWWQ. The chain crosses the membrane as a helical span at residues 31 to 52; it reads SATGLFLGLFMIGHMFFVSTIL. His-44 is a binding site for heme b. Over 53-76 the chain is Periplasmic; that stretch reads LGDNVMLWVTKKFELDFIFEGGKP. A helical transmembrane segment spans residues 77–98; it reads IVVSFLAAFVFAVFIAHAFLAM. His-93 lines the heme b pocket. Topologically, residues 99–124 are cytoplasmic; sequence RKFPINYRQYLTFKTHKDLMRHGDTT. The helical transmembrane segment at 125–149 threads the bilayer; sequence LWWIQAMTGFAMFFLGSVHLYIMMT. Residue His-143 participates in heme b binding. Residues 150–165 lie on the Periplasmic side of the membrane; it reads QPQTIGPVSSSFRMVS. Residues 166-188 form a helical membrane-spanning segment; the sequence is EWMWPLYLVLLFAVELHGSVGLY. Residue His-182 coordinates heme b. Topologically, residues 189 to 206 are cytoplasmic; that stretch reads RLAVKWGWFDGETPDKTR. The helical transmembrane segment at 207–230 threads the bilayer; it reads ANLKKLKTLMSAFLIVLGLLTFGA. The Periplasmic segment spans residues 231–256; it reads YVKKGLEQTDPNIDYKYFDYKRTHHR.

It belongs to the diheme cytochrome b FrdC family. Part of an enzyme complex containing three subunits: a flavoprotein (frdA), an iron-sulfur protein (frdB), and diheme cytochrome b (frdC). The cofactor is heme b.

Its subcellular location is the cell inner membrane. In terms of biological role, the fumarate reductase enzyme complex is required for fumarate respiration using formate or sulfide as electron donor. This subunit anchors the complex in the membrane and binds a diheme cytochrome b. The sequence is that of Fumarate reductase cytochrome b subunit (frdC) from Wolinella succinogenes (strain ATCC 29543 / DSM 1740 / CCUG 13145 / JCM 31913 / LMG 7466 / NCTC 11488 / FDC 602W) (Vibrio succinogenes).